We begin with the raw amino-acid sequence, 368 residues long: Isocitrate dehydrogenase [NAD] subunit 2, mitochondrial (368 aa).

Residues 1–14 (MFRQSIVKQSCRFL) constitute a mitochondrion transit peptide. Substrate contacts are provided by Arg-118, Arg-128, Arg-149, and Asp-236. Residues Asp-236, Asp-262, and Asp-266 each coordinate Mg(2+).

The protein belongs to the isocitrate and isopropylmalate dehydrogenases family. Octamer of two non-identical subunits IDH1 and IDH2. Mg(2+) is required as a cofactor. It depends on Mn(2+) as a cofactor.

The protein localises to the mitochondrion. It catalyses the reaction D-threo-isocitrate + NAD(+) = 2-oxoglutarate + CO2 + NADH. Functionally, performs an essential role in the oxidative function of the citric acid cycle. The polypeptide is Isocitrate dehydrogenase [NAD] subunit 2, mitochondrial (IDH2) (Kluyveromyces lactis (strain ATCC 8585 / CBS 2359 / DSM 70799 / NBRC 1267 / NRRL Y-1140 / WM37) (Yeast)).